The following is a 65-amino-acid chain: Large ribosomal subunit protein bL28 (65 aa).

Belongs to the bacterial ribosomal protein bL28 family.

The polypeptide is Large ribosomal subunit protein bL28 (Pseudothermotoga lettingae (strain ATCC BAA-301 / DSM 14385 / NBRC 107922 / TMO) (Thermotoga lettingae)).